A 499-amino-acid polypeptide reads, in one-letter code: Glycerol kinase (499 aa).

Residue T13 coordinates ADP. ATP contacts are provided by T13, T14, and S15. A sn-glycerol 3-phosphate-binding site is contributed by T13. R17 serves as a coordination point for ADP. Sn-glycerol 3-phosphate is bound by residues R83, E84, Y136, and D246. Glycerol contacts are provided by R83, E84, Y136, D246, and Q247. ADP-binding residues include T268 and G311. ATP is bound by residues T268, G311, Q315, and G412. G412 and N416 together coordinate ADP.

It belongs to the FGGY kinase family.

It carries out the reaction glycerol + ATP = sn-glycerol 3-phosphate + ADP + H(+). Its pathway is polyol metabolism; glycerol degradation via glycerol kinase pathway; sn-glycerol 3-phosphate from glycerol: step 1/1. Inhibited by fructose 1,6-bisphosphate (FBP). Key enzyme in the regulation of glycerol uptake and metabolism. Catalyzes the phosphorylation of glycerol to yield sn-glycerol 3-phosphate. This Francisella philomiragia subsp. philomiragia (strain ATCC 25017 / CCUG 19701 / FSC 153 / O#319-036) protein is Glycerol kinase.